The primary structure comprises 248 residues: Ubiquinone/menaquinone biosynthesis C-methyltransferase UbiE (248 aa).

S-adenosyl-L-methionine contacts are provided by residues threonine 71, aspartate 92, and 120-121 (DA).

This sequence belongs to the class I-like SAM-binding methyltransferase superfamily. MenG/UbiE family.

It catalyses the reaction a 2-demethylmenaquinol + S-adenosyl-L-methionine = a menaquinol + S-adenosyl-L-homocysteine + H(+). The enzyme catalyses a 2-methoxy-6-(all-trans-polyprenyl)benzene-1,4-diol + S-adenosyl-L-methionine = a 5-methoxy-2-methyl-3-(all-trans-polyprenyl)benzene-1,4-diol + S-adenosyl-L-homocysteine + H(+). Its pathway is quinol/quinone metabolism; menaquinone biosynthesis; menaquinol from 1,4-dihydroxy-2-naphthoate: step 2/2. The protein operates within cofactor biosynthesis; ubiquinone biosynthesis. Methyltransferase required for the conversion of demethylmenaquinol (DMKH2) to menaquinol (MKH2) and the conversion of 2-polyprenyl-6-methoxy-1,4-benzoquinol (DDMQH2) to 2-polyprenyl-3-methyl-6-methoxy-1,4-benzoquinol (DMQH2). The protein is Ubiquinone/menaquinone biosynthesis C-methyltransferase UbiE of Methylococcus capsulatus (strain ATCC 33009 / NCIMB 11132 / Bath).